The primary structure comprises 287 residues: tRNA uridine(34) hydroxylase (287 aa).

The Rhodanese domain occupies 132–226 (QGRPVVMLDT…YFEEVGGAHY (95 aa)). Residue Cys-186 is the Cysteine persulfide intermediate of the active site.

It belongs to the TrhO family.

It carries out the reaction uridine(34) in tRNA + AH2 + O2 = 5-hydroxyuridine(34) in tRNA + A + H2O. Catalyzes oxygen-dependent 5-hydroxyuridine (ho5U) modification at position 34 in tRNAs. This is tRNA uridine(34) hydroxylase from Paraburkholderia phytofirmans (strain DSM 17436 / LMG 22146 / PsJN) (Burkholderia phytofirmans).